Here is a 148-residue protein sequence, read N- to C-terminus: Large ribosomal subunit protein uL15 (148 aa).

The interval 1–57 (MRLNDVKPQKGSKKRRRRVGRGISAGQGASAGLGMRGQKSRSGSGTRPGFEGGQQPL) is disordered. Residues 10–20 (KGSKKRRRRVG) are compositionally biased toward basic residues. Over residues 23–35 (ISAGQGASAGLGM) the composition is skewed to gly residues.

Belongs to the universal ribosomal protein uL15 family. Part of the 50S ribosomal subunit.

In terms of biological role, binds to the 23S rRNA. The sequence is that of Large ribosomal subunit protein uL15 from Nostoc sp. (strain PCC 7120 / SAG 25.82 / UTEX 2576).